We begin with the raw amino-acid sequence, 182 residues long: MRITVSGLPGSGTTSLSRYLSERYGFTMISAGEVFRQCAKEHNMELAEFGRLAEKDPAYDKMIDARQKEIAEKSDNIIVEGRLSGWMVENADLKIWLFAPISCRLDRIVFRDQIADVETAKAITLEREHCEAIRYQQYYSIDINDHSVYHLILNSEHWGVDDLGKIVAAAIDQLKKTPFAAS.

Residue 7–15 (GLPGSGTTS) participates in ATP binding.

The protein belongs to the cytidylate kinase family. Type 2 subfamily.

The protein localises to the cytoplasm. It catalyses the reaction CMP + ATP = CDP + ADP. It carries out the reaction dCMP + ATP = dCDP + ADP. The polypeptide is Cytidylate kinase (Methanoregula boonei (strain DSM 21154 / JCM 14090 / 6A8)).